The following is a 689-amino-acid chain: Beta-adrenergic receptor kinase 1 (689 aa).

Residues 1–190 (MADLEAVLAD…ELNIHLTMND (190 aa)) form an N-terminal region. The region spanning 54 to 175 (TFEKIFSQKL…IESDKFTRFC (122 aa)) is the RGS domain. The region spanning 191-453 (FSVHRIIGRG…AQEVKESPFF (263 aa)) is the Protein kinase domain. Residues 197–205 (IGRGGFGEV) and Lys220 each bind ATP. Catalysis depends on Asp317, which acts as the Proton acceptor. The region spanning 454–521 (RSLDWQMVFL…TISERWQQEV (68 aa)) is the AGC-kinase C-terminal domain. The region spanning 558-652 (DCIVHGYMSK…WKKELRDAYR (95 aa)) is the PH domain. At Ser670 the chain carries Phosphoserine.

Belongs to the protein kinase superfamily. AGC Ser/Thr protein kinase family. GPRK subfamily. In terms of assembly, interacts with the heterodimer formed by GNB1 and GNG2. Interacts with GIT1. Interacts with, and phosphorylates chemokine-stimulated CCR5. Interacts with ARRB1. Interacts with LPAR1 and LPAR2. Interacts with RALA in response to LPAR1 activation. ADRBK1 and RALA mutually inhibit each other's binding to LPAR1. Interacts with ADRB2.

It localises to the cytoplasm. The protein resides in the cell membrane. The protein localises to the postsynapse. It is found in the presynapse. The catalysed reaction is [beta-adrenergic receptor] + ATP = [beta-adrenergic receptor]-phosphate + ADP + H(+). With respect to regulation, in contrast to other AGC family kinases, the catalytic activity is solely regulated by the binding of substrates and ligands, not by phosphorylation of the kinase domain. In terms of biological role, specifically phosphorylates the agonist-occupied form of the beta-adrenergic and closely related receptors, probably inducing a desensitization of them. Key regulator of LPAR1 signaling. Competes with RALA for binding to LPAR1 thus affecting the signaling properties of the receptor. Desensitizes LPAR1 and LPAR2 in a phosphorylation-independent manner. Positively regulates ciliary smoothened (SMO)-dependent Hedgehog (Hh) signaling pathway by facilitating the trafficking of SMO into the cilium and the stimulation of SMO activity. Inhibits relaxation of airway smooth muscle in response to blue light. This chain is Beta-adrenergic receptor kinase 1, found in Mus musculus (Mouse).